Reading from the N-terminus, the 92-residue chain is Protein OP-ORF (92 aa).

Positions 53–82 form a coiled coil; sequence KMLAATISILEEEVTELVTELNNTTNLTAK.

This is Protein OP-ORF from Rice dwarf virus (isolate Fujian) (RDV).